The primary structure comprises 199 residues: MKHVNVLLAGGASRRFGEPKAFVKWKGRMLYECAKEALGEQTVIISRPEFIDRFQENGENEVYQDAEPFQGMGPLAGIYTAFKKTDGDLYTVLSCDTPLIQRRTMLELKRLMIAGADAVVPISDGQVQPLIAIYHKRIMPVLYDQLSEKRLRISDLLGRISVCYVQAENIGANPAEFININTRDDFSCLEEKSNSLKRD.

Residues 8–10 (LAG), Lys20, Asp65, and Asp96 contribute to the GTP site. A Mg(2+)-binding site is contributed by Asp96.

The protein belongs to the MobA family. The cofactor is Mg(2+).

It localises to the cytoplasm. It catalyses the reaction Mo-molybdopterin + GTP + H(+) = Mo-molybdopterin guanine dinucleotide + diphosphate. Its function is as follows. Transfers a GMP moiety from GTP to Mo-molybdopterin (Mo-MPT) cofactor (Moco or molybdenum cofactor) to form Mo-molybdopterin guanine dinucleotide (Mo-MGD) cofactor. The protein is Probable molybdenum cofactor guanylyltransferase of Bacillus subtilis (strain 168).